We begin with the raw amino-acid sequence, 147 residues long: Large ribosomal subunit protein bL9 (147 aa).

This sequence belongs to the bacterial ribosomal protein bL9 family.

Binds to the 23S rRNA. In Campylobacter hominis (strain ATCC BAA-381 / DSM 21671 / CCUG 45161 / LMG 19568 / NCTC 13146 / CH001A), this protein is Large ribosomal subunit protein bL9.